Reading from the N-terminus, the 490-residue chain is GTPase Der (490 aa).

EngA-type G domains lie at 3-167 (FTLA…DAFE) and 203-378 (LQVA…EVWN). GTP contacts are provided by residues 9 to 16 (GRPNVGKS), 56 to 60 (DTAGL), 119 to 122 (NKAE), 209 to 216 (GRPNAGKS), 256 to 260 (DTAGM), and 321 to 324 (NKWD). In terms of domain architecture, KH-like spans 379–465 (RRVPTAALNR…RLTMRSQSDA (87 aa)). Residues 451–490 (PGTPIRLTMRSQSDANPYKNRKKSTPSRLRKHLGKPSLKG) form a disordered region. Positions 469-484 (KNRKKSTPSRLRKHLG) are enriched in basic residues.

Belongs to the TRAFAC class TrmE-Era-EngA-EngB-Septin-like GTPase superfamily. EngA (Der) GTPase family. In terms of assembly, associates with the 50S ribosomal subunit.

Functionally, GTPase that plays an essential role in the late steps of ribosome biogenesis. This is GTPase Der from Dinoroseobacter shibae (strain DSM 16493 / NCIMB 14021 / DFL 12).